We begin with the raw amino-acid sequence, 83 residues long: Small ribosomal subunit protein bS16 (83 aa).

This sequence belongs to the bacterial ribosomal protein bS16 family.

This Azoarcus sp. (strain BH72) protein is Small ribosomal subunit protein bS16.